We begin with the raw amino-acid sequence, 337 residues long: UDP-3-O-acylglucosamine N-acyltransferase (337 aa).

His-238 serves as the catalytic Proton acceptor.

It belongs to the transferase hexapeptide repeat family. LpxD subfamily. As to quaternary structure, homotrimer.

It catalyses the reaction a UDP-3-O-[(3R)-3-hydroxyacyl]-alpha-D-glucosamine + a (3R)-hydroxyacyl-[ACP] = a UDP-2-N,3-O-bis[(3R)-3-hydroxyacyl]-alpha-D-glucosamine + holo-[ACP] + H(+). The protein operates within bacterial outer membrane biogenesis; LPS lipid A biosynthesis. Catalyzes the N-acylation of UDP-3-O-acylglucosamine using 3-hydroxyacyl-ACP as the acyl donor. Is involved in the biosynthesis of lipid A, a phosphorylated glycolipid that anchors the lipopolysaccharide to the outer membrane of the cell. This chain is UDP-3-O-acylglucosamine N-acyltransferase, found in Xanthomonas oryzae pv. oryzae (strain MAFF 311018).